We begin with the raw amino-acid sequence, 360 residues long: Phosphoserine aminotransferase (360 aa).

Arg41 is a binding site for L-glutamate. Residues Trp101, Thr152, Asp172, and Gln195 each coordinate pyridoxal 5'-phosphate. Lys196 is subject to N6-(pyridoxal phosphate)lysine. Asn237–Thr238 is a binding site for pyridoxal 5'-phosphate.

This sequence belongs to the class-V pyridoxal-phosphate-dependent aminotransferase family. SerC subfamily. Homodimer. The cofactor is pyridoxal 5'-phosphate.

The protein localises to the cytoplasm. The enzyme catalyses O-phospho-L-serine + 2-oxoglutarate = 3-phosphooxypyruvate + L-glutamate. The catalysed reaction is 4-(phosphooxy)-L-threonine + 2-oxoglutarate = (R)-3-hydroxy-2-oxo-4-phosphooxybutanoate + L-glutamate. It functions in the pathway amino-acid biosynthesis; L-serine biosynthesis; L-serine from 3-phospho-D-glycerate: step 2/3. Its pathway is cofactor biosynthesis; pyridoxine 5'-phosphate biosynthesis; pyridoxine 5'-phosphate from D-erythrose 4-phosphate: step 3/5. Functionally, catalyzes the reversible conversion of 3-phosphohydroxypyruvate to phosphoserine and of 3-hydroxy-2-oxo-4-phosphonooxybutanoate to phosphohydroxythreonine. The chain is Phosphoserine aminotransferase from Burkholderia multivorans (strain ATCC 17616 / 249).